We begin with the raw amino-acid sequence, 365 residues long: MFEINPVKNKIIDLSDRTSVLRGYLDFDAKVERLEEVNGELEQPDVWNDPDKAQALGKERVSLEQVVNTIKNLEQGLEDVDGLLELAIEAEDEDTFNEAVAELDELEQQLEKLEFRRMFSGEHDACDCYVDLQAGSGGTEAQDWTEMLLRMYLRWAESKGFKTELMEVSDGDVAGLKSATIKVSGEYAFGWLRTETGIHRLVRKSPFDSNNRRHTSFSAAFVYPEIDDDIDIEINPADLRIDVYRASGAGGQHVNKTESAVRITHMPSGIVVQCQNDRSQHKNKDQAMKQLKAKLYELELQKKNADKQAMEDNKSDIGWGSQIRSYVLDDSRIKDLRTGVENRNTQAVLDGDLDRFIEASLKAGL.

Position 252 is an N5-methylglutamine (Gln252).

This sequence belongs to the prokaryotic/mitochondrial release factor family. Post-translationally, methylated by PrmC. Methylation increases the termination efficiency of RF2.

The protein localises to the cytoplasm. In terms of biological role, peptide chain release factor 2 directs the termination of translation in response to the peptide chain termination codons UGA and UAA. The polypeptide is Peptide chain release factor 2 (prfB) (Haemophilus influenzae (strain ATCC 51907 / DSM 11121 / KW20 / Rd)).